We begin with the raw amino-acid sequence, 365 residues long: Cobalt-precorrin-5B C(1)-methyltransferase (365 aa).

Belongs to the CbiD family.

It catalyses the reaction Co-precorrin-5B + S-adenosyl-L-methionine = Co-precorrin-6A + S-adenosyl-L-homocysteine. It functions in the pathway cofactor biosynthesis; adenosylcobalamin biosynthesis; cob(II)yrinate a,c-diamide from sirohydrochlorin (anaerobic route): step 6/10. Its function is as follows. Catalyzes the methylation of C-1 in cobalt-precorrin-5B to form cobalt-precorrin-6A. This Methanococcus maripaludis (strain DSM 14266 / JCM 13030 / NBRC 101832 / S2 / LL) protein is Cobalt-precorrin-5B C(1)-methyltransferase.